A 361-amino-acid chain; its full sequence is Phosphoserine aminotransferase (361 aa).

Residue arginine 43 coordinates L-glutamate. Pyridoxal 5'-phosphate contacts are provided by residues 77–78 (AS), tryptophan 103, threonine 153, aspartate 173, and glutamine 196. Residue lysine 197 is modified to N6-(pyridoxal phosphate)lysine. 238 to 239 (NT) is a pyridoxal 5'-phosphate binding site.

Belongs to the class-V pyridoxal-phosphate-dependent aminotransferase family. SerC subfamily. Homodimer. The cofactor is pyridoxal 5'-phosphate.

Its subcellular location is the cytoplasm. The enzyme catalyses O-phospho-L-serine + 2-oxoglutarate = 3-phosphooxypyruvate + L-glutamate. It catalyses the reaction 4-(phosphooxy)-L-threonine + 2-oxoglutarate = (R)-3-hydroxy-2-oxo-4-phosphooxybutanoate + L-glutamate. Its pathway is amino-acid biosynthesis; L-serine biosynthesis; L-serine from 3-phospho-D-glycerate: step 2/3. It participates in cofactor biosynthesis; pyridoxine 5'-phosphate biosynthesis; pyridoxine 5'-phosphate from D-erythrose 4-phosphate: step 3/5. Functionally, catalyzes the reversible conversion of 3-phosphohydroxypyruvate to phosphoserine and of 3-hydroxy-2-oxo-4-phosphonooxybutanoate to phosphohydroxythreonine. This is Phosphoserine aminotransferase from Pseudomonas fluorescens (strain SBW25).